We begin with the raw amino-acid sequence, 226 residues long: Transcriptional regulatory protein DpiA (226 aa).

One can recognise a Response regulatory domain in the interval 6–122; it reads TLLIVEDETP…RLGQTLTRFR (117 aa). D57 carries the 4-aspartylphosphate modification. The H-T-H motif DNA-binding region spans 180 to 199; that stretch reads AETVAQALTISRTTARRYLE.

In terms of processing, phosphorylated and activated by DpiB.

It localises to the cytoplasm. Functionally, member of the two-component regulatory system DpiA/DpiB, which is essential for expression of citrate-specific fermentation genes and genes involved in plasmid inheritance. Could be involved in response to both the presence of citrate and external redox conditions. This Escherichia coli O157:H7 protein is Transcriptional regulatory protein DpiA (dpiA).